Consider the following 96-residue polypeptide: Small ribosomal subunit protein bS16 (96 aa).

The protein belongs to the bacterial ribosomal protein bS16 family.

The chain is Small ribosomal subunit protein bS16 from Oenococcus oeni (strain ATCC BAA-331 / PSU-1).